We begin with the raw amino-acid sequence, 248 residues long: MAQRRFFVGGNWKMNGNKESLEELMSTLNTASLHEDTEVVCAAPSIYLDFARSGLDSRISVAAQNCYKVAKGAFTGEISPAMIKDCGADWVILGHSERRHVFGENDELIGQKVAHALESDLSVIACIGEKLEEREAGTTEDVIFAQTQVIAENVMDWEKVVLAYEPVWAIGTGKTATPEQAQEVHEKLRAWFRANISEEVSDSLRIIYGGSVTAANCRELASQTDVDGFLVGGASLKPEFIDIINARA.

2 residues coordinate substrate: Asn-11 and Lys-13. His-95 acts as the Electrophile in catalysis. Glu-165 (proton acceptor) is an active-site residue.

The protein belongs to the triosephosphate isomerase family. In terms of assembly, homodimer.

It localises to the cytoplasm. It catalyses the reaction D-glyceraldehyde 3-phosphate = dihydroxyacetone phosphate. It carries out the reaction dihydroxyacetone phosphate = methylglyoxal + phosphate. It participates in carbohydrate degradation; glycolysis; D-glyceraldehyde 3-phosphate from glycerone phosphate: step 1/1. It functions in the pathway carbohydrate biosynthesis; gluconeogenesis. Functionally, triosephosphate isomerase is an extremely efficient metabolic enzyme that catalyzes the interconversion between dihydroxyacetone phosphate (DHAP) and D-glyceraldehyde-3-phosphate (G3P) in glycolysis and gluconeogenesis. In terms of biological role, it is also responsible for the non-negligible production of methylglyoxal a reactive cytotoxic side-product that modifies and can alter proteins, DNA and lipids. This is Triosephosphate isomerase (tpi1) from Oryzias latipes (Japanese rice fish).